Here is a 593-residue protein sequence, read N- to C-terminus: Aspartate--tRNA ligase (593 aa).

E180 provides a ligand contact to L-aspartate. Positions 204 to 207 (QIFK) are aspartate. Position 226 (R226) interacts with L-aspartate. ATP contacts are provided by residues 226–228 (RDE) and Q235. H453 provides a ligand contact to L-aspartate. Residue E487 participates in ATP binding. R494 contacts L-aspartate. 539 to 542 (GLDR) is a binding site for ATP.

Belongs to the class-II aminoacyl-tRNA synthetase family. Type 1 subfamily. In terms of assembly, homodimer.

It localises to the cytoplasm. The enzyme catalyses tRNA(Asp) + L-aspartate + ATP = L-aspartyl-tRNA(Asp) + AMP + diphosphate. Its function is as follows. Catalyzes the attachment of L-aspartate to tRNA(Asp) in a two-step reaction: L-aspartate is first activated by ATP to form Asp-AMP and then transferred to the acceptor end of tRNA(Asp). This is Aspartate--tRNA ligase from Clostridium botulinum (strain Kyoto / Type A2).